Here is a 121-residue protein sequence, read N- to C-terminus: Heme-degrading monooxygenase (121 aa).

The 100-residue stretch at 2–101 folds into the ABM domain; that stretch reads IIVTNTIKVE…EQREDRKGIV (100 aa). Asparagine 6 is a Fe cation binding site. The tract at residues 76–98 is disordered; the sequence is KSDSFKKAHGRTKDTREQREDRK. Residues 78–98 show a composition bias toward basic and acidic residues; sequence DSFKKAHGRTKDTREQREDRK. Histidine 84 is a binding site for heme.

It belongs to the antibiotic biosynthesis monooxygenase family. Heme-degrading monooxygenase IsdG subfamily. Homodimer.

It localises to the cytoplasm. It catalyses the reaction heme b + 3 reduced [NADPH--hemoprotein reductase] + 3 O2 = biliverdin IXalpha + CO + Fe(2+) + 3 oxidized [NADPH--hemoprotein reductase] + 3 H2O + H(+). Allows bacterial pathogens to use the host heme as an iron source. Catalyzes the oxidative degradation of the heme macrocyclic porphyrin ring to the biliverdin in the presence of a suitable electron donor such as ascorbate or NADPH--cytochrome P450 reductase, with subsequent release of free iron. This chain is Heme-degrading monooxygenase, found in Listeria welshimeri serovar 6b (strain ATCC 35897 / DSM 20650 / CCUG 15529 / CIP 8149 / NCTC 11857 / SLCC 5334 / V8).